Consider the following 201-residue polypeptide: Small ribosomal subunit protein uS4c (201 aa).

The interval serine 23–serine 42 is disordered. The S4 RNA-binding domain maps to methionine 89–tyrosine 151.

The protein belongs to the universal ribosomal protein uS4 family. Part of the 30S ribosomal subunit. Contacts protein S5. The interaction surface between S4 and S5 is involved in control of translational fidelity.

The protein localises to the plastid. The protein resides in the chloroplast. One of the primary rRNA binding proteins, it binds directly to 16S rRNA where it nucleates assembly of the body of the 30S subunit. Its function is as follows. With S5 and S12 plays an important role in translational accuracy. The protein is Small ribosomal subunit protein uS4c (rps4) of Morus indica (Mulberry).